We begin with the raw amino-acid sequence, 136 residues long: Transcription antitermination protein NusB (136 aa).

This sequence belongs to the NusB family.

Functionally, involved in transcription antitermination. Required for transcription of ribosomal RNA (rRNA) genes. Binds specifically to the boxA antiterminator sequence of the ribosomal RNA (rrn) operons. The sequence is that of Transcription antitermination protein NusB from Pseudoalteromonas translucida (strain TAC 125).